The chain runs to 426 residues: Protein BTN1 (426 aa).

The signal sequence occupies residues 1–32; it reads MFIISETQRTFASFFIFGLLNNILYVIILSAA. 10 consecutive transmembrane segments (helical) span residues 44–64, 67–87, 99–119, 129–149, 154–174, 243–263, 290–310, 318–338, 340–360, and 384–404; these read IVLL…PFFI, VPYI…MVLI, ILGI…FLQL, IGGF…LFMV, MGFP…GFII, ITPL…SEYV, IYVV…SSVT, LYLL…QSIY, LPFH…LLGG, and GCVS…NWWL.

The protein belongs to the battenin family.

The protein localises to the vacuole membrane. In terms of biological role, involved in vacuolar transport and vacuole pH homeostasis. Also required for cytokinesis. The sequence is that of Protein BTN1 (BTN1) from Candida albicans (strain SC5314 / ATCC MYA-2876) (Yeast).